The primary structure comprises 292 residues: Protease HtpX (292 aa).

The next 2 helical transmembrane spans lie at 5–25 and 34–54; these read IFLF…VMSL and SGLL…SLLL. His-140 contributes to the Zn(2+) binding site. The active site involves Glu-141. His-144 lines the Zn(2+) pocket. Helical transmembrane passes span 155–175 and 193–213; these read LLQG…GGII and IIVF…AMWF. Glu-218 is a binding site for Zn(2+).

Belongs to the peptidase M48B family. Zn(2+) is required as a cofactor.

The protein resides in the cell inner membrane. In Xanthomonas axonopodis pv. citri (strain 306), this protein is Protease HtpX.